We begin with the raw amino-acid sequence, 702 residues long: Dynein intermediate chain 2, ciliary (702 aa).

The segment covering methionine 1–glycine 11 has biased composition (low complexity). 3 disordered regions span residues methionine 1 to aspartate 64, aspartate 128 to threonine 226, and glutamine 243 to serine 272. Basic and acidic residues-rich tracts occupy residues glycine 36–glutamate 52 and glycine 152–glutamate 176. A compositionally biased stretch (polar residues) spans lysine 189 to asparagine 206. Positions glutamine 243–serine 261 are enriched in basic and acidic residues. WD repeat units follow at residues proline 380–valine 420, lysine 429–threonine 472, threonine 490–aspartate 533, alanine 537–phenylalanine 577, aspartate 580–isoleucine 620, and lysine 628–proline 667.

It belongs to the dynein intermediate chain family. Consists of at least two heavy chains (alpha and beta), three intermediate chains and several light chains.

Its subcellular location is the cytoplasm. The protein localises to the cytoskeleton. It localises to the cilium axoneme. Its function is as follows. Microtubule-binding protein that may be involved in dynein outer arm assembly on the axoneme. The protein is Dynein intermediate chain 2, ciliary of Heliocidaris crassispina (Sea urchin).